Reading from the N-terminus, the 255-residue chain is Ribonuclease HII (255 aa).

One can recognise an RNase H type-2 domain in the interval 70–255 (ELIAGVDEVG…FEPIKSIIKK (186 aa)). Asp76, Glu77, and Asp168 together coordinate a divalent metal cation.

Belongs to the RNase HII family. The cofactor is Mn(2+). Mg(2+) serves as cofactor.

The protein resides in the cytoplasm. The enzyme catalyses Endonucleolytic cleavage to 5'-phosphomonoester.. In terms of biological role, endonuclease that specifically degrades the RNA of RNA-DNA hybrids. The sequence is that of Ribonuclease HII from Streptococcus thermophilus (strain ATCC BAA-491 / LMD-9).